The chain runs to 31 residues: Cytochrome b6-f complex subunit 6 (31 aa).

A helical transmembrane segment spans residues 5–25 (ISYLGILVGALLFVTITFLTL).

It belongs to the PetL family. The 4 large subunits of the cytochrome b6-f complex are cytochrome b6, subunit IV (17 kDa polypeptide, PetD), cytochrome f and the Rieske protein, while the 4 small subunits are PetG, PetL, PetM and PetN. The complex functions as a dimer.

Its subcellular location is the plastid. It is found in the chloroplast thylakoid membrane. Its function is as follows. Component of the cytochrome b6-f complex, which mediates electron transfer between photosystem II (PSII) and photosystem I (PSI), cyclic electron flow around PSI, and state transitions. PetL is important for photoautotrophic growth as well as for electron transfer efficiency and stability of the cytochrome b6-f complex. The polypeptide is Cytochrome b6-f complex subunit 6 (Chlorokybus atmophyticus (Soil alga)).